A 526-amino-acid chain; its full sequence is ATP synthase subunit alpha (526 aa).

Residue 171-178 (GDRQVGKT) coordinates ATP.

Belongs to the ATPase alpha/beta chains family. In terms of assembly, F-type ATPases have 2 components, CF(1) - the catalytic core - and CF(0) - the membrane proton channel. CF(1) has five subunits: alpha(3), beta(3), gamma(1), delta(1), epsilon(1). CF(0) has three main subunits: a(1), b(2) and c(9-12). The alpha and beta chains form an alternating ring which encloses part of the gamma chain. CF(1) is attached to CF(0) by a central stalk formed by the gamma and epsilon chains, while a peripheral stalk is formed by the delta and b chains.

The protein localises to the cell inner membrane. The catalysed reaction is ATP + H2O + 4 H(+)(in) = ADP + phosphate + 5 H(+)(out). Functionally, produces ATP from ADP in the presence of a proton gradient across the membrane. The alpha chain is a regulatory subunit. This is ATP synthase subunit alpha from Azobacteroides pseudotrichonymphae genomovar. CFP2.